The primary structure comprises 82 residues: Defensin-like protein 156 (82 aa).

The signal sequence occupies residues 1–27 (MAKISCSYFLVLMLVFSVFSLVEKTKG). Disulfide bonds link cysteine 31-cysteine 77, cysteine 41-cysteine 60, cysteine 46-cysteine 71, and cysteine 50-cysteine 73.

It belongs to the DEFL family. As to expression, expressed in flower buds, but not in stems, roots or rosette leaves.

The protein localises to the secreted. In Arabidopsis thaliana (Mouse-ear cress), this protein is Defensin-like protein 156 (LCR21).